Consider the following 590-residue polypeptide: V-type ATP synthase alpha chain (590 aa).

231-238 (GPFGSGKT) provides a ligand contact to ATP.

Belongs to the ATPase alpha/beta chains family.

It carries out the reaction ATP + H2O + 4 H(+)(in) = ADP + phosphate + 5 H(+)(out). Its function is as follows. Produces ATP from ADP in the presence of a proton gradient across the membrane. The V-type alpha chain is a catalytic subunit. In Clostridium botulinum (strain Langeland / NCTC 10281 / Type F), this protein is V-type ATP synthase alpha chain.